The chain runs to 526 residues: Cytochrome P450 monooxygenase patI (526 aa).

Topologically, residues 1-6 (MDILQL) are cytoplasmic. Residues 7–29 (APTHLLAILLSSTSALFLITYLL) traverse the membrane as a helical segment. At 30–526 (RAGHRPSDLP…EAQEVFARFD (497 aa)) the chain is on the lumenal side. The N-linked (GlcNAc...) asparagine glycan is linked to asparagine 81. Residue cysteine 446 coordinates heme.

Belongs to the cytochrome P450 family. The cofactor is heme.

It localises to the endoplasmic reticulum membrane. The catalysed reaction is 3-hydroxybenzyl alcohol + reduced [NADPH--hemoprotein reductase] + O2 = gentisyl alcohol + oxidized [NADPH--hemoprotein reductase] + H2O + H(+). It functions in the pathway mycotoxin biosynthesis; patulin biosynthesis. Cytochrome P450 monooxygenase; part of the gene cluster that mediates the biosynthesis of patulin, an acetate-derived tetraketide mycotoxin produced by several fungal species that shows antimicrobial properties against several bacteria. PatI catalyzes the conversion of m-hydroxybenzyl alcohol into gentisyl alcohol. The pathway begins with the synthesis of 6-methylsalicylic acid by the polyketide synthase (PKS) patK via condensation of acetate and malonate units. The 6-methylsalicylic acid decarboxylase patG then catalyzes the decarboxylation of 6-methylsalicylic acid to yield m-cresol (also known as 3-methylphenol). These first reactions occur in the cytosol. The intermediate m-cresol is then transported into the endoplasmic reticulum where the cytochrome P450 monooxygenase patH converts it to m-hydroxybenzyl alcohol, which is further converted to gentisyl alcohol by the cytochrome P450 monooxygenase patI. The oxidoreductases patJ and patO further convert gentisyl alcohol to isoepoxydon in the vacuole. PatN catalyzes then the transformation of isoepoxydon into phyllostine. The cluster protein patF is responsible for the conversion from phyllostine to neopatulin whereas the alcohol dehydrogenase patD converts neopatulin to E-ascladiol. The steps between isoepoxydon and E-ascladiol occur in the cytosol, and E-ascladiol is probably secreted to the extracellular space by one of the cluster-specific transporters patC or patM. Finally, the secreted patulin synthase patE catalyzes the conversion of E-ascladiol to patulin. This chain is Cytochrome P450 monooxygenase patI, found in Penicillium expansum (Blue mold rot fungus).